A 308-amino-acid polypeptide reads, in one-letter code: uncharacterized protein (308 aa).

Residues 191 to 211 (YLCLNLPYIIVALTLVPYSLV) traverse the membrane as a helical segment.

The protein resides in the host membrane. This is an uncharacterized protein from Saccharolobus islandicus (Sulfolobus islandicus).